We begin with the raw amino-acid sequence, 386 residues long: 2-isopropylmalate synthase (386 aa).

In terms of domain architecture, Pyruvate carboxyltransferase spans 12–265; it reads VRIFDTTLRD…EVNIKTYKLY (254 aa). A divalent metal cation is bound by residues aspartate 21, histidine 203, histidine 205, and asparagine 239.

The protein belongs to the alpha-IPM synthase/homocitrate synthase family. In terms of assembly, homodimer. It depends on a divalent metal cation as a cofactor.

The enzyme catalyses 3-methyl-2-oxobutanoate + acetyl-CoA + H2O = (2S)-2-isopropylmalate + CoA + H(+). The protein operates within amino-acid biosynthesis; L-leucine biosynthesis; L-leucine from 3-methyl-2-oxobutanoate: step 1/4. Functionally, catalyzes the condensation of the acetyl group of acetyl-CoA with 3-methyl-2-oxobutanoate (2-oxoisovalerate) to form 3-carboxy-3-hydroxy-4-methylpentanoate (2-isopropylmalate). Carries out the first step of the leucine biosynthesis pathway. This is 2-isopropylmalate synthase (leuA) from Sulfurisphaera tokodaii (strain DSM 16993 / JCM 10545 / NBRC 100140 / 7) (Sulfolobus tokodaii).